The primary structure comprises 810 residues: Leucine--tRNA ligase (810 aa).

The 'HIGH' region motif lies at Pro43 to His53. Residues Lys578–Ser582 carry the 'KMSKS' region motif. Lys581 serves as a coordination point for ATP.

This sequence belongs to the class-I aminoacyl-tRNA synthetase family.

It is found in the cytoplasm. It catalyses the reaction tRNA(Leu) + L-leucine + ATP = L-leucyl-tRNA(Leu) + AMP + diphosphate. This is Leucine--tRNA ligase from Solibacter usitatus (strain Ellin6076).